The primary structure comprises 119 residues: Protein Wnt-4 (119 aa).

A lipid anchor (O-palmitoleoyl serine; by PORCN) is attached at Ser1. Intrachain disulfides connect Cys69-Cys100 and Cys85-Cys95. N-linked (GlcNAc...) asparagine glycosylation is present at Asn86.

Belongs to the Wnt family. Palmitoleoylation is required for efficient binding to frizzled receptors. Depalmitoleoylation leads to Wnt signaling pathway inhibition.

It is found in the secreted. Its subcellular location is the extracellular space. It localises to the extracellular matrix. Its function is as follows. Ligand for members of the frizzled family of seven transmembrane receptors. Plays an important role in embryonic development. This is Protein Wnt-4 (WNT-4) from Plethodon jordani (Red-cheeked salamander).